Here is a 157-residue protein sequence, read N- to C-terminus: SsrA-binding protein (157 aa).

Residues 133–157 (LHDKRETEKKRDWSREKSRLLRARG) are disordered. The segment covering 135 to 151 (DKRETEKKRDWSREKSR) has biased composition (basic and acidic residues).

This sequence belongs to the SmpB family.

Its subcellular location is the cytoplasm. In terms of biological role, required for rescue of stalled ribosomes mediated by trans-translation. Binds to transfer-messenger RNA (tmRNA), required for stable association of tmRNA with ribosomes. tmRNA and SmpB together mimic tRNA shape, replacing the anticodon stem-loop with SmpB. tmRNA is encoded by the ssrA gene; the 2 termini fold to resemble tRNA(Ala) and it encodes a 'tag peptide', a short internal open reading frame. During trans-translation Ala-aminoacylated tmRNA acts like a tRNA, entering the A-site of stalled ribosomes, displacing the stalled mRNA. The ribosome then switches to translate the ORF on the tmRNA; the nascent peptide is terminated with the 'tag peptide' encoded by the tmRNA and targeted for degradation. The ribosome is freed to recommence translation, which seems to be the essential function of trans-translation. The chain is SsrA-binding protein from Afipia carboxidovorans (strain ATCC 49405 / DSM 1227 / KCTC 32145 / OM5) (Oligotropha carboxidovorans).